A 112-amino-acid chain; its full sequence is Large ribosomal subunit protein mL53 (112 aa).

The protein belongs to the mitochondrion-specific ribosomal protein mL53 family. As to quaternary structure, component of the mitochondrial large ribosomal subunit (mt-LSU). Mature mammalian 55S mitochondrial ribosomes consist of a small (28S) and a large (39S) subunit. The 28S small subunit contains a 12S ribosomal RNA (12S mt-rRNA) and 30 different proteins. The 39S large subunit contains a 16S rRNA (16S mt-rRNA), a copy of mitochondrial valine transfer RNA (mt-tRNA(Val)), which plays an integral structural role, and 52 different proteins. mL53 is located at the L7/L12 stalk.

It localises to the mitochondrion. The protein is Large ribosomal subunit protein mL53 (MRPL53) of Homo sapiens (Human).